The sequence spans 245 residues: 5-oxoprolinase subunit A (245 aa).

The protein belongs to the LamB/PxpA family. As to quaternary structure, forms a complex composed of PxpA, PxpB and PxpC.

It carries out the reaction 5-oxo-L-proline + ATP + 2 H2O = L-glutamate + ADP + phosphate + H(+). Functionally, catalyzes the cleavage of 5-oxoproline to form L-glutamate coupled to the hydrolysis of ATP to ADP and inorganic phosphate. In Yersinia enterocolitica serotype O:8 / biotype 1B (strain NCTC 13174 / 8081), this protein is 5-oxoprolinase subunit A.